A 346-amino-acid chain; its full sequence is Hydroxymethylglutaryl-CoA synthase (346 aa).

Asp28 provides a ligand contact to (3S)-3-hydroxy-3-methylglutaryl-CoA. The active-site Proton donor/acceptor is the Glu80. 2 residues coordinate (3S)-3-hydroxy-3-methylglutaryl-CoA: Cys112 and Thr153. Cys112 functions as the Acyl-thioester intermediate in the catalytic mechanism. Arg199 contributes to the CoA binding site. Positions 201 and 234 each coordinate (3S)-3-hydroxy-3-methylglutaryl-CoA. His234 functions as the Proton donor/acceptor in the catalytic mechanism. Lys239 is a binding site for CoA. Residues Arg243, Asn266, and Ser296 each contribute to the (3S)-3-hydroxy-3-methylglutaryl-CoA site.

The protein belongs to the thiolase-like superfamily. Archaeal HMG-CoA synthase family. In terms of assembly, interacts with acetoacetyl-CoA thiolase that catalyzes the precedent step in the pathway and with a DUF35 protein. The acetoacetyl-CoA thiolase/HMG-CoA synthase complex channels the intermediate via a fused CoA-binding site, which allows for efficient coupling of the endergonic thiolase reaction with the exergonic HMGCS reaction.

It catalyses the reaction acetoacetyl-CoA + acetyl-CoA + H2O = (3S)-3-hydroxy-3-methylglutaryl-CoA + CoA + H(+). It functions in the pathway metabolic intermediate biosynthesis; (R)-mevalonate biosynthesis; (R)-mevalonate from acetyl-CoA: step 2/3. Catalyzes the condensation of acetyl-CoA with acetoacetyl-CoA to form 3-hydroxy-3-methylglutaryl-CoA (HMG-CoA). Functions in the mevalonate (MVA) pathway leading to isopentenyl diphosphate (IPP), a key precursor for the biosynthesis of isoprenoid compounds that are building blocks of archaeal membrane lipids. This is Hydroxymethylglutaryl-CoA synthase from Methanosphaera stadtmanae (strain ATCC 43021 / DSM 3091 / JCM 11832 / MCB-3).